Here is a 59-residue protein sequence, read N- to C-terminus: uncharacterized protein (59 aa).

This is an uncharacterized protein from Caenorhabditis elegans.